We begin with the raw amino-acid sequence, 907 residues long: Phosphoenolpyruvate carboxylase (907 aa).

Active-site residues include His-138 and Lys-570.

It belongs to the PEPCase type 1 family. Mg(2+) is required as a cofactor.

The catalysed reaction is oxaloacetate + phosphate = phosphoenolpyruvate + hydrogencarbonate. Functionally, forms oxaloacetate, a four-carbon dicarboxylic acid source for the tricarboxylic acid cycle. The polypeptide is Phosphoenolpyruvate carboxylase (Streptococcus mutans serotype c (strain ATCC 700610 / UA159)).